Reading from the N-terminus, the 219-residue chain is 2-hydroxy-3-keto-5-methylthiopentenyl-1-phosphate phosphatase (219 aa).

Belongs to the HAD-like hydrolase superfamily. MtnX family.

The catalysed reaction is 2-hydroxy-5-methylsulfanyl-3-oxopent-1-enyl phosphate + H2O = 1,2-dihydroxy-5-(methylsulfanyl)pent-1-en-3-one + phosphate. It participates in amino-acid biosynthesis; L-methionine biosynthesis via salvage pathway; L-methionine from S-methyl-5-thio-alpha-D-ribose 1-phosphate: step 4/6. In terms of biological role, dephosphorylates 2-hydroxy-3-keto-5-methylthiopentenyl-1-phosphate (HK-MTPenyl-1-P) yielding 1,2-dihydroxy-3-keto-5-methylthiopentene (DHK-MTPene). This is 2-hydroxy-3-keto-5-methylthiopentenyl-1-phosphate phosphatase from Bacillus cereus (strain B4264).